We begin with the raw amino-acid sequence, 273 residues long: Citrate lyase subunit beta-like protein (273 aa).

Residues R64 and E112 each contribute to the substrate site. Mg(2+) is bound by residues E112 and D138.

Belongs to the HpcH/HpaI aldolase family. Citrate lyase beta subunit-like subfamily. Homotrimer. Mg(2+) is required as a cofactor.

Functionally, may play a role in fatty acid biosynthesis. In Mycobacterium tuberculosis (strain CDC 1551 / Oshkosh), this protein is Citrate lyase subunit beta-like protein (citE).